The chain runs to 642 residues: MAKILGIDLGTTNSCMAVMEGGQGTVLENSEGARTTPSIVAFTKSGERLVGQAAKRQAVTNPKNTVFSSKRLIGRKYSELTEEDKKVPYEIVEAPNGDAYIRVDVGGEKKTFSPQEIASMVLAKLKADAESKLGETITEAVITVPAYFNDAQRNATKAAGEIAGLKVRRIINEPTAAALAYGLDKKSNENIAVYDLGGGTFDISVLEIGDGVFEVKASDGDTHLGGDDWDNAIINWIIGEFKKDSGMDLSNQPDAIQRIKEEAEKAKIALSSTQSYDISLPFITADASGPKHIQLTLSRPKLEQLTEDLLDRTRKPVLDCIAASGLKTGDIDELVLVGGMTRMPAVQEMAHTLAGKEPHKGVNPDEVVALGAAIQGGVLQGDVNDVLLLDVTPLTLSIETMGGIATPMIERNTTIPVRKSQVFSTAADNQPAVDIRICQGERKMFEDNKLLGNFKLDGISPAPRGVPQIEVTFDIDANGILHVSAKDKGTGKEQKISIQGSSGLSKDEIERAKRDAEAHAEEDKKRAEEIDTINQADSLCFSVERQLKDMGDKLPADLKREIEDKVTRLKEAVSKKDVTAIKAGKEDLESRLEALYKAAEAAQQSAGAAGPMPGAPAEEEPSDGPRKAKGRVVDAEIVDDDK.

The residue at position 200 (Thr200) is a Phosphothreonine; by autocatalysis. Residues 600–616 (EAAQQSAGAAGPMPGAP) show a composition bias toward low complexity. The interval 600–642 (EAAQQSAGAAGPMPGAPAEEEPSDGPRKAKGRVVDAEIVDDDK) is disordered. Over residues 623 to 634 (DGPRKAKGRVVD) the composition is skewed to basic and acidic residues.

The protein belongs to the heat shock protein 70 family.

Functionally, acts as a chaperone. The chain is Chaperone protein DnaK from Akkermansia muciniphila (strain ATCC BAA-835 / DSM 22959 / JCM 33894 / BCRC 81048 / CCUG 64013 / CIP 107961 / Muc).